Reading from the N-terminus, the 202-residue chain is Matrix protein (202 aa).

The interval 12 to 33 is disordered; it reads RDEDTQKPSPVSAPPDDDDLWL. A PPXY motif motif is present at residues 35–38; the sequence is PPEY. The essential for glycoprotein binding stretch occupies residues 115–151; sequence KLRRTLIFQWADSRGPLEGEELEYSQEITWDDDTEFV.

The protein belongs to the lyssavirus matrix protein family. In terms of assembly, homomultimer. Interacts with nucleoprotein and with the cytoplasmic domain of glycoprotein. Interacts with host ATP6V1A; this interaction plays an important role in virion uncoating after viral entry.

The protein localises to the virion membrane. It is found in the host endomembrane system. It localises to the host cytoplasm. Functionally, plays a major role in assembly, budding and uncoating of virion after membrane fusion. Completely covers the ribonucleoprotein coil and keep it in condensed bullet-shaped form. Inhibits viral transcription and stimulates replication. Plays a major role in early induction of TRAIL-mediated apoptosis in infected neurons. Inhibits the integrated stress response (ISR) in the infected cell by blocking the formation of stress granules. This Rabies virus (strain PM1503/AVO1) (RABV) protein is Matrix protein (M).